Reading from the N-terminus, the 176-residue chain is 3-hydroxyanthranilate 3,4-dioxygenase (176 aa).

An O2-binding site is contributed by R44. Residues H48, E54, and H92 each coordinate Fe cation. E54 serves as a coordination point for substrate. The substrate site is built by R96 and E106. C121, C124, C158, and C161 together coordinate Fe cation.

The protein belongs to the 3-HAO family. In terms of assembly, homodimer. It depends on Fe(2+) as a cofactor.

It catalyses the reaction 3-hydroxyanthranilate + O2 = (2Z,4Z)-2-amino-3-carboxymuconate 6-semialdehyde. It functions in the pathway cofactor biosynthesis; NAD(+) biosynthesis; quinolinate from L-kynurenine: step 3/3. Functionally, catalyzes the oxidative ring opening of 3-hydroxyanthranilate to 2-amino-3-carboxymuconate semialdehyde, which spontaneously cyclizes to quinolinate. The polypeptide is 3-hydroxyanthranilate 3,4-dioxygenase (Xanthomonas oryzae pv. oryzae (strain MAFF 311018)).